Consider the following 430-residue polypeptide: Enolase (430 aa).

Residue Gln-165 coordinates (2R)-2-phosphoglycerate. Catalysis depends on Glu-207, which acts as the Proton donor. Residues Asp-244, Glu-287, and Asp-314 each contribute to the Mg(2+) site. Residues Lys-339, Arg-368, Ser-369, and Lys-390 each coordinate (2R)-2-phosphoglycerate. Lys-339 functions as the Proton acceptor in the catalytic mechanism.

Belongs to the enolase family. Component of the RNA degradosome, a multiprotein complex involved in RNA processing and mRNA degradation. It depends on Mg(2+) as a cofactor.

It is found in the cytoplasm. The protein resides in the secreted. Its subcellular location is the cell surface. It catalyses the reaction (2R)-2-phosphoglycerate = phosphoenolpyruvate + H2O. It participates in carbohydrate degradation; glycolysis; pyruvate from D-glyceraldehyde 3-phosphate: step 4/5. Catalyzes the reversible conversion of 2-phosphoglycerate (2-PG) into phosphoenolpyruvate (PEP). It is essential for the degradation of carbohydrates via glycolysis. This Stenotrophomonas maltophilia (strain K279a) protein is Enolase.